A 431-amino-acid chain; its full sequence is Serine/threonine-protein kinase Sgk1 (431 aa).

The segment at Met-1–Ile-60 is necessary for localization to the mitochondria. Positions Gln-64–His-92 are disordered. Residue Ser-74 is modified to Phosphoserine. Phosphoserine; by MAPK7 is present on Ser-78. A compositionally biased stretch (polar residues) spans Gln-81 to Pro-91. The Protein kinase domain maps to Phe-98 to Phe-355. Residues Ile-104–Val-112 and Lys-127 each bind ATP. Residues Lys-131–Lys-141 carry the Nuclear localization signal motif. The active-site Proton acceptor is the Asp-222. Thr-256 carries the phosphothreonine; by PDPK1 modification. An AGC-kinase C-terminal domain is found at Ser-356–Leu-431. Thr-369 carries the post-translational modification Phosphothreonine; by PKA. Phosphoserine occurs at positions 397, 401, and 422.

Belongs to the protein kinase superfamily. AGC Ser/Thr protein kinase family. As to quaternary structure, homodimer; disulfide-linked. Forms a trimeric complex with FBXW7 and NOTCH1. Interacts with MAPK3/ERK1, MAPK1/ERK2, MAP2K1/MEK1, MAP2K2/MEK2, NEDD4, NEDD4L, MAPT/TAU, MAPK7, CREB1, SLC9A3R2/NHERF2 and KCNJ1/ROMK1. Associates with the mammalian target of rapamycin complex 2 (mTORC2) via an interaction with MAPKAP1/SIN1. Post-translationally, regulated by phosphorylation. Activated by phosphorylation on Ser-422 by mTORC2, transforming it into a substrate for PDPK1 which phosphorylates it on Thr-256. Phosphorylation on Ser-397 and Ser-401 are also essential for its activity. Phosphorylation on Ser-78 by MAPK7 is required for growth factor-induced cell cycle progression. In terms of processing, ubiquitinated by NEDD4L; which promotes proteasomal degradation. Ubiquitinated by SYVN1 at the endoplasmic reticulum; which promotes rapid proteasomal degradation and maintains a high turnover rate in resting cells.

It is found in the cytoplasm. The protein resides in the nucleus. The protein localises to the endoplasmic reticulum membrane. Its subcellular location is the cell membrane. It localises to the mitochondrion. The catalysed reaction is L-seryl-[protein] + ATP = O-phospho-L-seryl-[protein] + ADP + H(+). It carries out the reaction L-threonyl-[protein] + ATP = O-phospho-L-threonyl-[protein] + ADP + H(+). With respect to regulation, two specific sites, one in the kinase domain (Thr-256) and the other in the C-terminal regulatory region (Ser-422), need to be phosphorylated for its full activation. Phosphorylation at Ser-397 and Ser-401 are also essential for its activity. Activated by WNK1, WNK2, WNK3 and WNK4; which promote phosphorylation by mTORC2. Its function is as follows. Serine/threonine-protein kinase which is involved in the regulation of a wide variety of ion channels, membrane transporters, cellular enzymes, transcription factors, neuronal excitability, cell growth, proliferation, survival, migration and apoptosis. Plays an important role in cellular stress response. Contributes to regulation of renal Na(+) retention, renal K(+) elimination, salt appetite, gastric acid secretion, intestinal Na(+)/H(+) exchange and nutrient transport, insulin-dependent salt sensitivity of blood pressure, salt sensitivity of peripheral glucose uptake, cardiac repolarization and memory consolidation. Up-regulates Na(+) channels: SCNN1A/ENAC, SCN5A and ASIC1/ACCN2, K(+) channels: KCNJ1/ROMK1, KCNA1-5, KCNQ1-5 and KCNE1, epithelial Ca(2+) channels: TRPV5 and TRPV6, chloride channels: BSND, CLCN2 and CFTR, glutamate transporters: SLC1A3/EAAT1, SLC1A2 /EAAT2, SLC1A1/EAAT3, SLC1A6/EAAT4 and SLC1A7/EAAT5, amino acid transporters: SLC1A5/ASCT2, SLC38A1/SN1 and SLC6A19, creatine transporter: SLC6A8, Na(+)/dicarboxylate cotransporter: SLC13A2/NADC1, Na(+)-dependent phosphate cotransporter: SLC34A2/NAPI-2B, glutamate receptor: GRIK2/GLUR6. Up-regulates carriers: SLC9A3/NHE3, SLC12A1/NKCC2, SLC12A3/NCC, SLC5A3/SMIT, SLC2A1/GLUT1, SLC5A1/SGLT1 and SLC15A2/PEPT2. Regulates enzymes: GSK3A/B, PMM2 and Na(+)/K(+) ATPase, and transcription factors: CTNNB1 and nuclear factor NF-kappa-B. Stimulates sodium transport into epithelial cells by enhancing the stability and expression of SCNN1A/ENAC. This is achieved by phosphorylating the NEDD4L ubiquitin E3 ligase, promoting its interaction with 14-3-3 proteins, thereby preventing it from binding to SCNN1A/ENAC and targeting it for degradation. Regulates store-operated Ca(+2) entry (SOCE) by stimulating ORAI1 and STIM1. Regulates KCNJ1/ROMK1 directly via its phosphorylation or indirectly via increased interaction with SLC9A3R2/NHERF2. Phosphorylates MDM2 and activates MDM2-dependent ubiquitination of p53/TP53. Phosphorylates MAPT/TAU and mediates microtubule depolymerization and neurite formation in hippocampal neurons. Phosphorylates SLC2A4/GLUT4 and up-regulates its activity. Phosphorylates APBB1/FE65 and promotes its localization to the nucleus. Phosphorylates MAPK1/ERK2 and activates it by enhancing its interaction with MAP2K1/MEK1 and MAP2K2/MEK2. Phosphorylates FBXW7 and plays an inhibitory role in the NOTCH1 signaling. Phosphorylates FOXO1 resulting in its relocalization from the nucleus to the cytoplasm. Phosphorylates FOXO3, promoting its exit from the nucleus and interference with FOXO3-dependent transcription. Phosphorylates BRAF and MAP3K3/MEKK3 and inhibits their activity. Phosphorylates SLC9A3/NHE3 in response to dexamethasone, resulting in its activation and increased localization at the cell membrane. Phosphorylates CREB1. Necessary for vascular remodeling during angiogenesis. This chain is Serine/threonine-protein kinase Sgk1 (SGK1), found in Bos taurus (Bovine).